We begin with the raw amino-acid sequence, 125 residues long: Protein Turandot F (125 aa).

Positions 1–19 (MKTVILFGFLLALLGYLEA) are cleaved as a signal peptide.

The protein belongs to the Turandot family.

The protein resides in the secreted. A humoral factor that may play a role in stress tolerance. In Drosophila melanogaster (Fruit fly), this protein is Protein Turandot F.